A 245-amino-acid chain; its full sequence is Type III pantothenate kinase (245 aa).

Position 6–13 (6–13 (DQGNTILK)) interacts with ATP. Residues Y86 and 93 to 96 (GTDR) contribute to the substrate site. The active-site Proton acceptor is the D95. D116 lines the K(+) pocket. T119 is an ATP binding site. T171 contacts substrate.

Belongs to the type III pantothenate kinase family. Homodimer. NH4(+) serves as cofactor. The cofactor is K(+).

The protein localises to the cytoplasm. The catalysed reaction is (R)-pantothenate + ATP = (R)-4'-phosphopantothenate + ADP + H(+). It functions in the pathway cofactor biosynthesis; coenzyme A biosynthesis; CoA from (R)-pantothenate: step 1/5. Functionally, catalyzes the phosphorylation of pantothenate (Pan), the first step in CoA biosynthesis. In Azobacteroides pseudotrichonymphae genomovar. CFP2, this protein is Type III pantothenate kinase.